Consider the following 770-residue polypeptide: Low-density lipoprotein receptor-related protein 3 (770 aa).

A signal peptide spans Met1–Ala36. Residues Val37–Lys496 lie on the Extracellular side of the membrane. Cystine bridges form between Cys43–Cys72, Cys99–Cys120, Cys166–Cys178, Cys173–Cys191, Cys185–Cys200, Cys212–Cys227, Cys219–Cys240, Cys234–Cys249, and Cys254–Cys282. Positions Cys43–Gly159 constitute a CUB 1 domain. The N-linked (GlcNAc...) asparagine glycan is linked to Asn71. LDL-receptor class A domains follow at residues Ser165–Ser201 and Leu211–Pro250. N-linked (GlcNAc...) asparagine glycosylation is present at Asn199. The CUB 2 domain occupies Cys254–Lys365. The N-linked (GlcNAc...) asparagine glycan is linked to Asn359. LDL-receptor class A domains follow at residues Ala415–Phe453 and Ser454–Leu490. 6 cysteine pairs are disulfide-bonded: Cys416–Cys430, Cys423–Cys443, Cys437–Cys452, Cys455–Cys467, Cys462–Cys480, and Cys474–Cys489. The helical transmembrane segment at Val497–Gly517 threads the bilayer. At Cys518–Cys770 the chain is on the cytoplasmic side. The segment at Leu635–Cys770 is disordered. Residues Arg689 to Leu707 show a composition bias toward basic and acidic residues. The segment covering Gln729–Gly738 has biased composition (polar residues). The segment covering Ala761–Cys770 has biased composition (acidic residues).

The protein belongs to the LDLR family. In terms of assembly, binds GGA1 and GGA2. In terms of tissue distribution, widely expressed. Highly expressed in skeletal muscle and ovary. Expressed at intermediate level in heart, brain, liver, pancreas, prostate and small intestine. Weakly expressed in testis, colon and leukocyte.

The protein resides in the membrane. It is found in the coated pit. Functionally, probable receptor, which may be involved in the internalization of lipophilic molecules and/or signal transduction. Its precise role is however unclear, since it does not bind to very low density lipoprotein (VLDL) or to LRPAP1 in vitro. This Homo sapiens (Human) protein is Low-density lipoprotein receptor-related protein 3 (LRP3).